We begin with the raw amino-acid sequence, 20 residues long: Cytochrome P450-RR1 (20 aa).

Belongs to the cytochrome P450 family. Requires heme as cofactor.

Functionally, P450-RRI catalyzes the O-dealkylation of 2-ethoxyphenol and 2-methoxyphenol to produce catechol. The cytochrome binds other ortho-substituted phenols, including 2-ethoxyphenol, 2-methylphenol and 2-chlorophenol. The polypeptide is Cytochrome P450-RR1 (Rhodococcus rhodochrous).